The chain runs to 65 residues: Large ribosomal subunit protein bL35 (65 aa).

The interval 1-52 (MPKIKTNRGAAKRFKRTGSGGFKCVQSHRRHILTKKSTKRKRQLRSPDMVHP) is disordered. A compositionally biased stretch (basic residues) spans 26–44 (QSHRRHILTKKSTKRKRQL).

Belongs to the bacterial ribosomal protein bL35 family.

This chain is Large ribosomal subunit protein bL35, found in Methylococcus capsulatus (strain ATCC 33009 / NCIMB 11132 / Bath).